We begin with the raw amino-acid sequence, 197 residues long: Scoloptoxin SSD20 (197 aa).

Positions 1 to 6 (PPMTTE) are cleaved as a signal peptide.

Expressed by the venom gland.

It is found in the secreted. May act as a voltage-gated potassium channel inhibitor. Is highly similar to the subunit beta of SSD14 which, when complexed with subunit alpha, induces platelet aggregation and hemolysis. This Scolopendra dehaani (Thai centipede) protein is Scoloptoxin SSD20.